Reading from the N-terminus, the 123-residue chain is Small ribosomal subunit protein eS8 (123 aa).

Positions 1-37 (MKDQGRSTRKRTGGRLKHASNKKRHQLGREPAETTVG) are disordered. Residues 7–26 (STRKRTGGRLKHASNKKRHQ) are compositionally biased toward basic residues.

Belongs to the eukaryotic ribosomal protein eS8 family. In terms of assembly, part of the 30S ribosomal subunit.

This Halorubrum lacusprofundi (strain ATCC 49239 / DSM 5036 / JCM 8891 / ACAM 34) protein is Small ribosomal subunit protein eS8.